The chain runs to 330 residues: MQPQSVLHSGYFHPLLRAWQTATTTLNASNLIYPIFVTDVPDDIQPIASLPGVARYGVNRLEEMLRPLVEEGLRCVLIFGIPSRVPKDERGSAADSEESPAIEAIHLLRKTFPNLLVACDICLCPYTSHGHCGLLSENGAFRAEESRQRLAEVALAYAKAGCQVVAPSDMMDGRVEAIKEALMAHGLGNRVSVMSYSAKFASCFYGPFRDAAQSSPAFGDRRCYQLPPGARGLALRAVDRDVREGADVLMVKPGMPYLDIVREVKDKHPDLPLAVYHVSGEFAMLWHGAQAGAFDLKAAVLEAMTAFRRAGADIIITYYTPQLLQWLKKE.

Positions 122, 124, 131, and 132 each coordinate Zn(2+). K199 (schiff-base intermediate with substrate) is an active-site residue. N6-succinyllysine is present on K199. R209 provides a ligand contact to 5-aminolevulinate. A Phosphoserine modification is found at S215. Residue R221 coordinates 5-aminolevulinate. Zn(2+) is bound at residue C223. The active-site Schiff-base intermediate with substrate is K252. K252 bears the N6-succinyllysine mark. 5-aminolevulinate contacts are provided by S279 and Y318.

This sequence belongs to the ALAD family. Homooctamer; active form. Homohexamer; low activity form. Zn(2+) serves as cofactor.

The protein localises to the cytoplasm. Its subcellular location is the cytosol. It catalyses the reaction 2 5-aminolevulinate = porphobilinogen + 2 H2O + H(+). The protein operates within porphyrin-containing compound metabolism; protoporphyrin-IX biosynthesis; coproporphyrinogen-III from 5-aminolevulinate: step 1/4. Can alternate between a fully active homooctamer and a low-activity homohexamer. A bound magnesium ion may promote the assembly of the fully active homooctamer. The magnesium-binding site is absent in the low-activity homohexamer. Inhibited by compounds that favor the hexameric state. Inhibited by divalent lead ions. The lead ions partially displace the zinc cofactor. Its function is as follows. Catalyzes an early step in the biosynthesis of tetrapyrroles. Binds two molecules of 5-aminolevulinate per subunit, each at a distinct site, and catalyzes their condensation to form porphobilinogen. The sequence is that of Delta-aminolevulinic acid dehydratase (ALAD) from Macaca fascicularis (Crab-eating macaque).